Consider the following 64-residue polypeptide: Large ribosomal subunit protein bL28 (64 aa).

Residues 1-23 (MARKDQISHRGPLSGNNRSHALN) are disordered.

Belongs to the bacterial ribosomal protein bL28 family.

The chain is Large ribosomal subunit protein bL28 from Mesomycoplasma hyopneumoniae (strain 232) (Mycoplasma hyopneumoniae).